Consider the following 371-residue polypeptide: Queuine tRNA-ribosyltransferase (371 aa).

D92 functions as the Proton acceptor in the catalytic mechanism. Substrate-binding positions include 92 to 96 (DSGGF), D147, Q190, and G217. Positions 248 to 254 (GVGKPID) are RNA binding. The Nucleophile role is filled by D267. An RNA binding; important for wobble base 34 recognition region spans residues 272 to 276 (TRSGR).

It belongs to the queuine tRNA-ribosyltransferase family. As to quaternary structure, homodimer. Within each dimer, one monomer is responsible for RNA recognition and catalysis, while the other monomer binds to the replacement base PreQ1.

It catalyses the reaction 7-aminomethyl-7-carbaguanine + guanosine(34) in tRNA = 7-aminomethyl-7-carbaguanosine(34) in tRNA + guanine. Its pathway is tRNA modification; tRNA-queuosine biosynthesis. Its function is as follows. Catalyzes the base-exchange of a guanine (G) residue with the queuine precursor 7-aminomethyl-7-deazaguanine (PreQ1) at position 34 (anticodon wobble position) in tRNAs with GU(N) anticodons (tRNA-Asp, -Asn, -His and -Tyr). Catalysis occurs through a double-displacement mechanism. The nucleophile active site attacks the C1' of nucleotide 34 to detach the guanine base from the RNA, forming a covalent enzyme-RNA intermediate. The proton acceptor active site deprotonates the incoming PreQ1, allowing a nucleophilic attack on the C1' of the ribose to form the product. After dissociation, two additional enzymatic reactions on the tRNA convert PreQ1 to queuine (Q), resulting in the hypermodified nucleoside queuosine (7-(((4,5-cis-dihydroxy-2-cyclopenten-1-yl)amino)methyl)-7-deazaguanosine). The sequence is that of Queuine tRNA-ribosyltransferase from Caulobacter vibrioides (strain ATCC 19089 / CIP 103742 / CB 15) (Caulobacter crescentus).